The sequence spans 88 residues: Small ribosomal subunit protein bS20 (88 aa).

The span at 1-21 shows a compositional bias: basic residues; sequence MANSKSAKKRALQSEKRRQHN. The interval 1–26 is disordered; sequence MANSKSAKKRALQSEKRRQHNASRSS.

The protein belongs to the bacterial ribosomal protein bS20 family.

In terms of biological role, binds directly to 16S ribosomal RNA. In Shewanella halifaxensis (strain HAW-EB4), this protein is Small ribosomal subunit protein bS20.